Consider the following 353-residue polypeptide: Photosystem II D2 protein (353 aa).

Thr-2 carries the post-translational modification N-acetylthreonine. Thr-2 bears the Phosphothreonine mark. The chain crosses the membrane as a helical span at residues 41 to 61 (CAYFALGGWFTGTTFVTSWYT). His-118 is a chlorophyll a binding site. The helical transmembrane segment at 125–141 (GFMLRQFELARSVQLRP) threads the bilayer. Pheophytin a contacts are provided by Gln-130 and Asn-143. The helical transmembrane segment at 153–166 (VFVSVFLIYPLGQS) threads the bilayer. Residue His-198 participates in chlorophyll a binding. Residues 208-228 (AALLCAIHGATVENTLFEDGD) traverse the membrane as a helical segment. A plastoquinone is bound by residues His-215 and Phe-262. His-215 serves as a coordination point for Fe cation. His-269 serves as a coordination point for Fe cation. The chain crosses the membrane as a helical span at residues 279 to 295 (GLWMSALGVVGLALNLR).

The protein belongs to the reaction center PufL/M/PsbA/D family. PSII is composed of 1 copy each of membrane proteins PsbA, PsbB, PsbC, PsbD, PsbE, PsbF, PsbH, PsbI, PsbJ, PsbK, PsbL, PsbM, PsbT, PsbX, PsbY, PsbZ, Psb30/Ycf12, at least 3 peripheral proteins of the oxygen-evolving complex and a large number of cofactors. It forms dimeric complexes. The D1/D2 heterodimer binds P680, chlorophylls that are the primary electron donor of PSII, and subsequent electron acceptors. It shares a non-heme iron and each subunit binds pheophytin, quinone, additional chlorophylls, carotenoids and lipids. There is also a Cl(-1) ion associated with D1 and D2, which is required for oxygen evolution. The PSII complex binds additional chlorophylls, carotenoids and specific lipids. serves as cofactor.

The protein localises to the plastid. It localises to the chloroplast thylakoid membrane. The enzyme catalyses 2 a plastoquinone + 4 hnu + 2 H2O = 2 a plastoquinol + O2. Photosystem II (PSII) is a light-driven water:plastoquinone oxidoreductase that uses light energy to abstract electrons from H(2)O, generating O(2) and a proton gradient subsequently used for ATP formation. It consists of a core antenna complex that captures photons, and an electron transfer chain that converts photonic excitation into a charge separation. The D1/D2 (PsbA/PsbD) reaction center heterodimer binds P680, the primary electron donor of PSII as well as several subsequent electron acceptors. D2 is needed for assembly of a stable PSII complex. The sequence is that of Photosystem II D2 protein from Lemna minor (Common duckweed).